The sequence spans 207 residues: Thiamine-phosphate synthase (207 aa).

4-amino-2-methyl-5-(diphosphooxymethyl)pyrimidine-binding positions include glutamine 37–lysine 41 and asparagine 69. The Mg(2+) site is built by aspartate 70 and aspartate 89. Serine 108 is a binding site for 4-amino-2-methyl-5-(diphosphooxymethyl)pyrimidine. Threonine 134–serine 136 contacts 2-[(2R,5Z)-2-carboxy-4-methylthiazol-5(2H)-ylidene]ethyl phosphate. Lysine 137 provides a ligand contact to 4-amino-2-methyl-5-(diphosphooxymethyl)pyrimidine. 2-[(2R,5Z)-2-carboxy-4-methylthiazol-5(2H)-ylidene]ethyl phosphate contacts are provided by residues glycine 165 and isoleucine 185–serine 186.

Belongs to the thiamine-phosphate synthase family. It depends on Mg(2+) as a cofactor.

The catalysed reaction is 2-[(2R,5Z)-2-carboxy-4-methylthiazol-5(2H)-ylidene]ethyl phosphate + 4-amino-2-methyl-5-(diphosphooxymethyl)pyrimidine + 2 H(+) = thiamine phosphate + CO2 + diphosphate. It carries out the reaction 2-(2-carboxy-4-methylthiazol-5-yl)ethyl phosphate + 4-amino-2-methyl-5-(diphosphooxymethyl)pyrimidine + 2 H(+) = thiamine phosphate + CO2 + diphosphate. It catalyses the reaction 4-methyl-5-(2-phosphooxyethyl)-thiazole + 4-amino-2-methyl-5-(diphosphooxymethyl)pyrimidine + H(+) = thiamine phosphate + diphosphate. It functions in the pathway cofactor biosynthesis; thiamine diphosphate biosynthesis; thiamine phosphate from 4-amino-2-methyl-5-diphosphomethylpyrimidine and 4-methyl-5-(2-phosphoethyl)-thiazole: step 1/1. Condenses 4-methyl-5-(beta-hydroxyethyl)thiazole monophosphate (THZ-P) and 2-methyl-4-amino-5-hydroxymethyl pyrimidine pyrophosphate (HMP-PP) to form thiamine monophosphate (TMP). This Desulfitobacterium hafniense (strain DSM 10664 / DCB-2) protein is Thiamine-phosphate synthase.